A 685-amino-acid polypeptide reads, in one-letter code: Protein OCTOPUS (685 aa).

3 disordered regions span residues 1–34 (MNPATDPVSAAAAALAPPPQPPQPHRLSTSCNRH), 152–202 (RNLP…DYVE), and 280–314 (KWRQNQKMKKRRNGGDHRPGSARLPVEKPIGRQLR). A compositionally biased stretch (acidic residues) spans 179–202 (VNDEGEAESDDEELEEEEEEDYVE). Positions 280–291 (KWRQNQKMKKRR) are enriched in basic residues. The span at 292–314 (NGGDHRPGSARLPVEKPIGRQLR) shows a compositional bias: basic and acidic residues. Ser-318 is subject to Phosphoserine. The segment at 419 to 471 (VEEPAPPPPVVNQTNGVSDPVIIPGGSIQTRDYYTDSSSRRRKSLDRSSSSMR) is disordered. A coiled-coil region spans residues 549–578 (LIYRKSVNKYEEEEEEEEDRYRRLNGGMVE). The interval 584 to 640 (SWPELRNGGGGGGGPRMVRSNSNVSWRSSGGGSARKVNGLDRRNKSSRYSPKNGENG) is disordered. Positions 601-611 (VRSNSNVSWRS) are enriched in low complexity.

It belongs to the OCTOPUS family. In terms of assembly, interacts with VCC. Post-translationally, phosphorylation at Ser-318 amplifies the promotion of protophloem differentiation. In terms of tissue distribution, expressed in provascular cells and phloem initials (e.g. protophloem, metaphloem, sieve element precursor cells and sieve element procambium precursor cells).

The protein resides in the cell membrane. The protein localises to the cytoplasm. Its function is as follows. Potentiates primary root protophloem differentiation. Required, together with VCC, for embryo provasculature development and cotyledon vascular complexity and connectivity. Regulates roots architecture. Mediates the recruitment of ASK7/BIN2 to the plasma membrane. In Arabidopsis thaliana (Mouse-ear cress), this protein is Protein OCTOPUS.